Here is a 604-residue protein sequence, read N- to C-terminus: Glutamine--fructose-6-phosphate aminotransferase [isomerizing] (604 aa).

Residue C2 is the Nucleophile; for GATase activity of the active site. A Glutamine amidotransferase type-2 domain is found at 2–218 (CGIVGVVGNR…DKELVILTKD (217 aa)). 2 SIS domains span residues 284-423 (IVKT…ANGK) and 456-594 (VEKL…VDKP). Residue K599 is the For Fru-6P isomerization activity of the active site.

As to quaternary structure, homodimer.

It is found in the cytoplasm. The enzyme catalyses D-fructose 6-phosphate + L-glutamine = D-glucosamine 6-phosphate + L-glutamate. Functionally, catalyzes the first step in hexosamine metabolism, converting fructose-6P into glucosamine-6P using glutamine as a nitrogen source. This is Glutamine--fructose-6-phosphate aminotransferase [isomerizing] from Streptococcus pyogenes serotype M6 (strain ATCC BAA-946 / MGAS10394).